We begin with the raw amino-acid sequence, 343 residues long: RNA 3'-terminal phosphate cyclase (343 aa).

ATP-binding positions include Gln102 and 284-288 (FLGDQ). The Tele-AMP-histidine intermediate role is filled by His308.

It belongs to the RNA 3'-terminal cyclase family. Type 1 subfamily.

It localises to the cytoplasm. It catalyses the reaction a 3'-end 3'-phospho-ribonucleotide-RNA + ATP = a 3'-end 2',3'-cyclophospho-ribonucleotide-RNA + AMP + diphosphate. Its function is as follows. Catalyzes the conversion of 3'-phosphate to a 2',3'-cyclic phosphodiester at the end of RNA. The mechanism of action of the enzyme occurs in 3 steps: (A) adenylation of the enzyme by ATP; (B) transfer of adenylate to an RNA-N3'P to produce RNA-N3'PP5'A; (C) and attack of the adjacent 2'-hydroxyl on the 3'-phosphorus in the diester linkage to produce the cyclic end product. The biological role of this enzyme is unknown but it is likely to function in some aspects of cellular RNA processing. This Thermococcus kodakarensis (strain ATCC BAA-918 / JCM 12380 / KOD1) (Pyrococcus kodakaraensis (strain KOD1)) protein is RNA 3'-terminal phosphate cyclase (rtcA).